A 396-amino-acid chain; its full sequence is MVDFGALPPEINSARMYAGPGSASLVAAAKMWDSVASDLFSAASAFQSVVWGLTTGSWIGSSAGLMVAAASPYVAWMSVTAGQAELTAAQVRVAAAAYETAYGLTVPPPVIAENRAELMILIATNLLGQNTPAIAVNEAEYGEMWAQDAAAMFGYAAATATATEALLPFEDAPLITNPGGLLEQAVAVEEAIDTAAANQLMNNVPQALQQLAQPTKSIWPFDQLSELWKAISPHLSPLSNIVSMLNNHVSMTNSGVSMASTLHSMLKGFAPAAAQAVETAAQNGVQAMSSLGSQLGSSLGSSGLGAGVAANLGRAASVGSLSVPQAWAAANQAVTPAARALPLTSLTSAAQTAPGHMLGGLPLGQLTNSGGGFGGVSNALRMPPRAYVMPRVPAAG.

It belongs to the mycobacterial PPE family.

This is an uncharacterized protein from Mycobacterium tuberculosis (strain CDC 1551 / Oshkosh).